Consider the following 1095-residue polypeptide: 1-phosphatidylinositol 4,5-bisphosphate phosphodiesterase (1095 aa).

Residues methionine 319–lysine 469 form the PI-PLC X-box domain. Active-site residues include histidine 334 and histidine 381. Lysine 467 and lysine 469 together coordinate substrate. The interval glutamate 487–glycine 529 is disordered. Residues alanine 500 to alanine 523 show a composition bias toward low complexity. The PI-PLC Y-box domain maps to leucine 550–arginine 666. 2 residues coordinate substrate: serine 579 and arginine 606. Residues arginine 666 to methionine 794 enclose the C2 domain. Disordered regions lie at residues isoleucine 842–glutamate 863 and glutamine 1000–lysine 1030. 2 stretches are compositionally biased toward basic and acidic residues: residues aspartate 852–glutamate 863 and threonine 1007–lysine 1030.

As to quaternary structure, interacts with inaD. As to expression, abundantly expressed in the adult retina.

The enzyme catalyses a 1,2-diacyl-sn-glycero-3-phospho-(1D-myo-inositol-4,5-bisphosphate) + H2O = 1D-myo-inositol 1,4,5-trisphosphate + a 1,2-diacyl-sn-glycerol + H(+). Its function is as follows. The production of the second messenger molecules diacylglycerol (DAG) and inositol 1,4,5-trisphosphate (IP3) is mediated by activated phosphatidylinositol-specific phospholipase C enzymes. Essential component of the phototransduction pathway. Essential downstream component of a hh-signaling pathway which regulates the Duox-dependent gut immune response to bacterial uracil; required for the activation of Cad99C and consequently Cad99C-dependent endosome formation, which is essential for the Duox-dependent production of reactive oxygen species (ROS) in response to intestinal bacterial infection. The sequence is that of 1-phosphatidylinositol 4,5-bisphosphate phosphodiesterase from Drosophila melanogaster (Fruit fly).